A 772-amino-acid polypeptide reads, in one-letter code: Annulin (772 aa).

Residues Cys-4 and Cys-5 are each lipidated (S-palmitoyl cysteine). The interval 15 to 57 is disordered; the sequence is NEGSGGGIPLMPVRGGSTRRPDSLPKPPAAVVPSPPSPGDVPD. Pro residues predominate over residues 38–53; that stretch reads LPKPPAAVVPSPPSPG. Active-site residues include His-400 and Asp-427. Residues Asn-467, Asp-469, Glu-517, and Glu-522 each coordinate Ca(2+).

It belongs to the transglutaminase superfamily. Transglutaminase family. It depends on Ca(2+) as a cofactor. Has an annular, or ring-like expression pattern in epithelial annuli of developing limb segment boundary cells. In embryos, it is seen in gastrulating cells, in cells surrounding rapidly dividing neuroblasts, and in muscle pioneer cells invaginating to form apodemes.

It is found in the cell membrane. The catalysed reaction is L-glutaminyl-[protein] + L-lysyl-[protein] = [protein]-L-lysyl-N(6)-5-L-glutamyl-[protein] + NH4(+). Participates in morphogenetic activities of the cells, maybe by stabilizing the membrane or subcortical structures of cells that are under mechanical stress. Probably catalyzes the cross-linking of proteins and the conjugation of polyamines to proteins. This chain is Annulin, found in Schistocerca americana (American grasshopper).